We begin with the raw amino-acid sequence, 135 residues long: T-cell receptor gamma chain V region V108A (135 aa).

An N-terminal signal peptide occupies residues 1–18 (MLLLRWFTSCCLWVFGLG). The v segment stretch occupies residues 19–116 (QLEQTELSVT…EATYYCAVWM (98 aa)). The tract at residues 117 to 135 (RWSSGFHKVFAEGTKLIVI) is j segment.

The sequence is that of T-cell receptor gamma chain V region V108A from Mus musculus (Mouse).